Here is an 89-residue protein sequence, read N- to C-terminus: NLVTDLYVKELKAFKPTPASAADAEAATKPWKLPQAAKVPSLEGEGADALAEYDSAKVEVVEASGETAAEEYNPDDWFVFEEEEEPGHH.

F-type ATP synthases have 2 components, the catalytic core F(1) and the membrane-embedded component F(0), linked together by a central stalk and a peripheral stalk. The central stalk, also called rotor shaft, is often seen as part of F(1). The peripheral stalk is seen as part of F(0). F(0) contains the membrane channel next to the rotor. F-type ATP synthases form dimers but each monomer functions independently in ATP generation. The dimer consists of 18 different polypeptides: ATP1 (subunit alpha, part of F(1), 3 molecules per monomer), ATP2 (subunit beta, part of F(1), 3 molecules per monomer), ATP3 (subunit gamma, part of the central stalk), ATP4 (subunit b, part of the peripheral stalk), ATP5/OSCP (subunit 5/OSCP, part of the peripheral stalk), ATP6 (subunit a, part of the peripheral stalk), ATP7 (subunit d, part of the peripheral stalk), ATP8 (subunit 8, part of the peripheral stalk), OLI1 (subunit c, part of the rotor, 10 molecules per monomer), ATP14 (subunit H, part of the peripheral stalk), ATP15 (subunit epsilon, part of the central stalk), ATP16 (subunit delta, part of the central stalk), ATP17 (subunit f, part of the peripheral stalk), ATP18 (subunit i/j, part of the peripheral stalk). Dimer-specific subunits are ATP19 (subunit k, at interface between monomers), ATP20 (subunit g, at interface between monomers), TIM11 (subunit e, at interface between monomers). Also contains subunit L.

It is found in the mitochondrion inner membrane. Functionally, mitochondrial membrane ATP synthase (F(1)F(0) ATP synthase or Complex V) produces ATP from ADP in the presence of a proton gradient across the membrane which is generated by electron transport complexes of the respiratory chain. F-type ATP synthases consist of two structural domains, F(1) - containing the extramembraneous catalytic core, and F(0) - containing the membrane proton channel, linked together by a central stalk and a peripheral stalk. During catalysis, ATP synthesis in the catalytic domain of F(1) is coupled via a rotary mechanism of the central stalk subunits to proton translocation. Part of the peripheral stalk. This chain is ATP synthase subunit H, mitochondrial, found in Pichia angusta (Yeast).